The chain runs to 95 residues: Aspartyl/glutamyl-tRNA(Asn/Gln) amidotransferase subunit C (95 aa).

It belongs to the GatC family. In terms of assembly, heterotrimer of A, B and C subunits.

It catalyses the reaction L-glutamyl-tRNA(Gln) + L-glutamine + ATP + H2O = L-glutaminyl-tRNA(Gln) + L-glutamate + ADP + phosphate + H(+). It carries out the reaction L-aspartyl-tRNA(Asn) + L-glutamine + ATP + H2O = L-asparaginyl-tRNA(Asn) + L-glutamate + ADP + phosphate + 2 H(+). Allows the formation of correctly charged Asn-tRNA(Asn) or Gln-tRNA(Gln) through the transamidation of misacylated Asp-tRNA(Asn) or Glu-tRNA(Gln) in organisms which lack either or both of asparaginyl-tRNA or glutaminyl-tRNA synthetases. The reaction takes place in the presence of glutamine and ATP through an activated phospho-Asp-tRNA(Asn) or phospho-Glu-tRNA(Gln). In Rhizobium etli (strain ATCC 51251 / DSM 11541 / JCM 21823 / NBRC 15573 / CFN 42), this protein is Aspartyl/glutamyl-tRNA(Asn/Gln) amidotransferase subunit C.